The primary structure comprises 415 residues: rRNA methyltransferase 3, mitochondrial (415 aa).

Residues 1 to 47 constitute a mitochondrion transit peptide; that stretch reads MAALCRGTVRACILKPLGLSVSLQVKRNVRALRRTPVRVLPAAEKGR. Residues 41–73 form a disordered region; it reads PAAEKGRERKEVEARRPQQPRQSEYQTRTSQGV. The span at 44–56 shows a compositional bias: basic and acidic residues; sequence EKGRERKEVEARR. A compositionally biased stretch (polar residues) spans 59-73; that stretch reads QPRQSEYQTRTSQGV. S-adenosyl-L-methionine is bound by residues Gly-357, Ile-381, and Leu-390.

The protein belongs to the class IV-like SAM-binding methyltransferase superfamily. RNA methyltransferase TrmH family.

The protein localises to the mitochondrion. The catalysed reaction is a uridine in rRNA + S-adenosyl-L-methionine = a 2'-O-methyluridine in rRNA + S-adenosyl-L-homocysteine + H(+). Its function is as follows. S-adenosyl-L-methionine-dependent 2'-O-ribose methyltransferase that catalyzes the formation of 2'-O-methylguanosine at position 1370 (Gm1370) in the mitochondrial large subunit ribosomal RNA (mtLSU rRNA), a conserved modification in the peptidyl transferase domain of the mtLSU rRNA. Also required for formation of 2'-O-methyluridine at position 1369 (Um1369) mediated by MRM2. This chain is rRNA methyltransferase 3, mitochondrial, found in Xenopus tropicalis (Western clawed frog).